Consider the following 358-residue polypeptide: Aromatic amino acid aminotransferase (358 aa).

At Lys-222 the chain carries N6-(pyridoxal phosphate)lysine.

Belongs to the class-II pyridoxal-phosphate-dependent aminotransferase family. In terms of assembly, homodimer. The cofactor is pyridoxal 5'-phosphate.

The catalysed reaction is an aromatic L-alpha-amino acid + 2-oxoglutarate = an aromatic oxo-acid + L-glutamate. Aminotransferase that catalyzes the conversion of aromatic amino acids and 2-oxoglutarate into corresponding aromatic oxo acids and L-glutamate. This chain is Aromatic amino acid aminotransferase, found in Mycobacterium sp. (strain JLS).